Consider the following 653-residue polypeptide: Chaperone protein HtpG (653 aa).

The interval 1-361 is a; substrate-binding; that stretch reads MSETNQVQNH…SNDLPLNVSR (361 aa). A b region spans residues 362–578; that stretch reads EILQDNKVTQ…DDDMSSQMAK (217 aa). Positions 579–653 are c; the sequence is LMASVGQEVP…LNKLMLSLTK (75 aa).

This sequence belongs to the heat shock protein 90 family. In terms of assembly, homodimer.

It localises to the cytoplasm. Molecular chaperone. Has ATPase activity. The chain is Chaperone protein HtpG from Colwellia psychrerythraea (strain 34H / ATCC BAA-681) (Vibrio psychroerythus).